Reading from the N-terminus, the 417-residue chain is F-box protein At3g07870 (417 aa).

Residues 22–68 form the F-box domain; sequence GGGLESLPEDIIADIFSRLPISSIARLMFVCRSWRSVLTQHGRLSSS.

The chain is F-box protein At3g07870 from Arabidopsis thaliana (Mouse-ear cress).